The following is a 250-amino-acid chain: Acetylglutamate kinase (250 aa).

Substrate is bound by residues 41–42, R63, and N156; that span reads GG.

Belongs to the acetylglutamate kinase family. ArgB subfamily.

Its subcellular location is the cytoplasm. It catalyses the reaction N-acetyl-L-glutamate + ATP = N-acetyl-L-glutamyl 5-phosphate + ADP. It participates in amino-acid biosynthesis; L-arginine biosynthesis; N(2)-acetyl-L-ornithine from L-glutamate: step 2/4. In terms of biological role, catalyzes the ATP-dependent phosphorylation of N-acetyl-L-glutamate. The polypeptide is Acetylglutamate kinase (Listeria monocytogenes serotype 4b (strain F2365)).